A 949-amino-acid polypeptide reads, in one-letter code: Bifunctional uridylyltransferase/uridylyl-removing enzyme (949 aa).

Residues 1 to 37 (MKETSFWGETPSLSFADDTDKPLSDRTASPPCDPASS) are disordered. The uridylyltransferase stretch occupies residues 1-395 (MKETSFWGET…TTGEPPKVVP (395 aa)). The interval 396–756 (GPEEFQTIAG…AYPIPERGVT (361 aa)) is uridylyl-removing. The HD domain maps to 516–632 (VDEHIVEAVR…LDLADTIQSP (117 aa)). 2 ACT domains span residues 757 to 834 (ELTV…LDIR) and 870 to 949 (VIEV…TPAS).

The protein belongs to the GlnD family. It depends on Mg(2+) as a cofactor.

It carries out the reaction [protein-PII]-L-tyrosine + UTP = [protein-PII]-uridylyl-L-tyrosine + diphosphate. It catalyses the reaction [protein-PII]-uridylyl-L-tyrosine + H2O = [protein-PII]-L-tyrosine + UMP + H(+). Its activity is regulated as follows. Uridylyltransferase (UTase) activity is inhibited by glutamine, while glutamine activates uridylyl-removing (UR) activity. Functionally, modifies, by uridylylation and deuridylylation, the PII regulatory proteins (GlnB and homologs), in response to the nitrogen status of the cell that GlnD senses through the glutamine level. Under low glutamine levels, catalyzes the conversion of the PII proteins and UTP to PII-UMP and PPi, while under higher glutamine levels, GlnD hydrolyzes PII-UMP to PII and UMP (deuridylylation). Thus, controls uridylylation state and activity of the PII proteins, and plays an important role in the regulation of nitrogen assimilation and metabolism. The polypeptide is Bifunctional uridylyltransferase/uridylyl-removing enzyme (Gluconobacter oxydans (strain 621H) (Gluconobacter suboxydans)).